We begin with the raw amino-acid sequence, 317 residues long: MPMQGAQRRLLGSLNSTPTATPNLGLAANHTGAPCLEVSIPDGLFLSLGLVSLVENVLVVAAIAKNRNLHSPMYCFICCLALSDLLVSGSNMLETAVILLLEAGALATRASVVQQLQNTIDVLTCSSMLCSLCFLGAIAVDRYVSIFYALRYHSIVTLPRARRAIAAIWVASVLSSTLFIAYCDHAAVLLCLVVFFLAMLVLMAVLYVHMLARACQHAQGITRLHKRQLPAHQGFGLRGAATLTILLGIFFLCWGPFFLHLMLVVLCPQHLTCSCIFKNFKVFLTLIICNTIIDPLIYAFRSQELCRTLKEVLLCSW.

Topologically, residues 1-37 are extracellular; that stretch reads MPMQGAQRRLLGSLNSTPTATPNLGLAANHTGAPCLE. N-linked (GlcNAc...) asparagine glycosylation is present at Asn29. Residues 38-63 traverse the membrane as a helical segment; sequence VSIPDGLFLSLGLVSLVENVLVVAAI. Residues 64–72 lie on the Cytoplasmic side of the membrane; sequence AKNRNLHSP. A helical transmembrane segment spans residues 73–93; the sequence is MYCFICCLALSDLLVSGSNML. Residues 94-118 are Extracellular-facing; sequence ETAVILLLEAGALATRASVVQQLQN. Residues 119–140 form a helical membrane-spanning segment; the sequence is TIDVLTCSSMLCSLCFLGAIAV. Topologically, residues 141-163 are cytoplasmic; that stretch reads DRYVSIFYALRYHSIVTLPRARR. Residues 164–183 traverse the membrane as a helical segment; the sequence is AIAAIWVASVLSSTLFIAYC. The Extracellular segment spans residues 184–191; sequence DHAAVLLC. A helical membrane pass occupies residues 192–211; sequence LVVFFLAMLVLMAVLYVHML. Residues 212-240 lie on the Cytoplasmic side of the membrane; the sequence is ARACQHAQGITRLHKRQLPAHQGFGLRGA. A helical transmembrane segment spans residues 241–266; the sequence is ATLTILLGIFFLCWGPFFLHLMLVVL. Over 267-279 the chain is Extracellular; it reads CPQHLTCSCIFKN. A helical membrane pass occupies residues 280-300; it reads FKVFLTLIICNTIIDPLIYAF. At 301–317 the chain is on the cytoplasmic side; that stretch reads RSQELCRTLKEVLLCSW. Cys315 is lipidated: S-palmitoyl cysteine.

It belongs to the G-protein coupled receptor 1 family. In terms of assembly, interacts with MGRN1, but does not undergo MGRN1-mediated ubiquitination; this interaction competes with GNAS-binding and thus inhibits agonist-induced cAMP production. Interacts with OPN3; the interaction results in a decrease in MC1R-mediated cAMP signaling and ultimately a decrease in melanin production in melanocytes.

It is found in the cell membrane. Functionally, receptor for MSH (alpha, beta and gamma) and ACTH. The activity of this receptor is mediated by G proteins which activate adenylate cyclase. Mediates melanogenesis, the production of eumelanin (black/brown) and phaeomelanin (red/yellow), via regulation of cAMP signaling in melanocytes. This is Melanocyte-stimulating hormone receptor (MC1R) from Alouatta palliata (Mantled howler monkey).